Here is a 171-residue protein sequence, read N- to C-terminus: UPF0303 protein YPN_2129 (171 aa).

It belongs to the UPF0303 family.

This chain is UPF0303 protein YPN_2129, found in Yersinia pestis bv. Antiqua (strain Nepal516).